The sequence spans 428 residues: UPF0597 protein Dde_0807 (428 aa).

This sequence belongs to the UPF0597 family.

This is UPF0597 protein Dde_0807 from Oleidesulfovibrio alaskensis (strain ATCC BAA-1058 / DSM 17464 / G20) (Desulfovibrio alaskensis).